The chain runs to 118 residues: Small ribosomal subunit protein uS13 (118 aa).

Residues 93–118 (RGLPVRGQRTKTNARTRKGPRKPIRK) form a disordered region.

Belongs to the universal ribosomal protein uS13 family. In terms of assembly, part of the 30S ribosomal subunit. Forms a loose heterodimer with protein S19. Forms two bridges to the 50S subunit in the 70S ribosome.

In terms of biological role, located at the top of the head of the 30S subunit, it contacts several helices of the 16S rRNA. In the 70S ribosome it contacts the 23S rRNA (bridge B1a) and protein L5 of the 50S subunit (bridge B1b), connecting the 2 subunits; these bridges are implicated in subunit movement. Contacts the tRNAs in the A and P-sites. The polypeptide is Small ribosomal subunit protein uS13 (Pseudomonas syringae pv. tomato (strain ATCC BAA-871 / DC3000)).